The following is a 142-amino-acid chain: Large ribosomal subunit protein uL13 (142 aa).

The protein belongs to the universal ribosomal protein uL13 family. In terms of assembly, part of the 50S ribosomal subunit.

This protein is one of the early assembly proteins of the 50S ribosomal subunit, although it is not seen to bind rRNA by itself. It is important during the early stages of 50S assembly. The protein is Large ribosomal subunit protein uL13 of Dictyoglomus thermophilum (strain ATCC 35947 / DSM 3960 / H-6-12).